Reading from the N-terminus, the 369-residue chain is Large ribosomal subunit protein uL4 (369 aa).

At threonine 2 the chain carries N-acetylthreonine.

This sequence belongs to the universal ribosomal protein uL4 family.

The chain is Large ribosomal subunit protein uL4 (rpl4) from Dictyostelium discoideum (Social amoeba).